We begin with the raw amino-acid sequence, 664 residues long: DNA ligase (664 aa).

NAD(+) is bound by residues 31 to 35 (DYEFD), 80 to 81 (SL), and Glu-110. Lys-112 acts as the N6-AMP-lysine intermediate in catalysis. NAD(+) is bound by residues Arg-133 and Glu-169. Positions 237–257 (LEKARKWGFKVPAESELKDSI) constitute a BRCT 1 domain. The NAD(+) site is built by Lys-284 and Lys-308. Zn(2+) contacts are provided by Cys-402, Cys-405, Cys-420, and Cys-426. Positions 586–664 (NQTNILEGNT…SEEDFLKMLE (79 aa)) constitute a BRCT 2 domain.

The protein belongs to the NAD-dependent DNA ligase family. LigA subfamily. It depends on Mg(2+) as a cofactor. Mn(2+) serves as cofactor.

The catalysed reaction is NAD(+) + (deoxyribonucleotide)n-3'-hydroxyl + 5'-phospho-(deoxyribonucleotide)m = (deoxyribonucleotide)n+m + AMP + beta-nicotinamide D-nucleotide.. In terms of biological role, DNA ligase that catalyzes the formation of phosphodiester linkages between 5'-phosphoryl and 3'-hydroxyl groups in double-stranded DNA using NAD as a coenzyme and as the energy source for the reaction. It is essential for DNA replication and repair of damaged DNA. The sequence is that of DNA ligase from Christiangramia forsetii (strain DSM 17595 / CGMCC 1.15422 / KT0803) (Gramella forsetii).